Here is a 204-residue protein sequence, read N- to C-terminus: Putative copper-binding protein (204 aa).

Cys-77, Cys-81, and His-166 together coordinate Cu cation.

The protein belongs to the SCO1/2 family.

This is Putative copper-binding protein (scoP) from Stutzerimonas stutzeri (Pseudomonas stutzeri).